The sequence spans 759 residues: 1,4-alpha-glucan branching enzyme GlgB (759 aa).

The interval M1–P21 is disordered. D422 acts as the Nucleophile in catalysis. Residue E475 is the Proton donor of the active site.

Belongs to the glycosyl hydrolase 13 family. GlgB subfamily. Monomer.

It carries out the reaction Transfers a segment of a (1-&gt;4)-alpha-D-glucan chain to a primary hydroxy group in a similar glucan chain.. It participates in glycan biosynthesis; glycogen biosynthesis. Its function is as follows. Catalyzes the formation of the alpha-1,6-glucosidic linkages in glycogen by scission of a 1,4-alpha-linked oligosaccharide from growing alpha-1,4-glucan chains and the subsequent attachment of the oligosaccharide to the alpha-1,6 position. In Mycobacterium sp. (strain JLS), this protein is 1,4-alpha-glucan branching enzyme GlgB.